Consider the following 143-residue polypeptide: Large ribosomal subunit protein uL11 (143 aa).

It belongs to the universal ribosomal protein uL11 family. As to quaternary structure, part of the ribosomal stalk of the 50S ribosomal subunit. Interacts with L10 and the large rRNA to form the base of the stalk. L10 forms an elongated spine to which L12 dimers bind in a sequential fashion forming a multimeric L10(L12)X complex. Post-translationally, one or more lysine residues are methylated.

In terms of biological role, forms part of the ribosomal stalk which helps the ribosome interact with GTP-bound translation factors. The protein is Large ribosomal subunit protein uL11 of Rhizobium rhizogenes (strain K84 / ATCC BAA-868) (Agrobacterium radiobacter).